The sequence spans 209 residues: Putative amino acid efflux protein YcgF (209 aa).

Transmembrane regions (helical) follow at residues 1 to 21, 39 to 59, 62 to 82, 110 to 130, 147 to 167, and 184 to 204; these read MNIF…VGPV, IFGL…YFGL, FLTA…VLTY, FASG…WLGI, LLIY…CMAI, and LTGI…YQGI.

Belongs to the Rht family.

It is found in the cell membrane. The polypeptide is Putative amino acid efflux protein YcgF (ycgF) (Bacillus subtilis (strain 168)).